A 330-amino-acid polypeptide reads, in one-letter code: Malate dehydrogenase (330 aa).

Gly15–Gly21 is an NAD(+) binding site. Residues Arg95 and Arg101 each coordinate substrate. NAD(+) is bound by residues Asn108, Gln115, and Val132–Asn134. Positions 134 and 165 each coordinate substrate. The Proton acceptor role is filled by His190.

It belongs to the LDH/MDH superfamily. MDH type 2 family.

It catalyses the reaction (S)-malate + NAD(+) = oxaloacetate + NADH + H(+). Catalyzes the reversible oxidation of malate to oxaloacetate. This is Malate dehydrogenase from Corynebacterium jeikeium (strain K411).